The primary structure comprises 431 residues: Enolase (431 aa).

Gln-167 lines the (2R)-2-phosphoglycerate pocket. Residue Glu-209 is the Proton donor of the active site. Mg(2+)-binding residues include Asp-246, Glu-290, and Asp-317. Lys-342, Arg-371, Ser-372, and Lys-393 together coordinate (2R)-2-phosphoglycerate. Lys-342 serves as the catalytic Proton acceptor.

It belongs to the enolase family. As to quaternary structure, component of the RNA degradosome, a multiprotein complex involved in RNA processing and mRNA degradation. It depends on Mg(2+) as a cofactor.

The protein resides in the cytoplasm. It localises to the secreted. The protein localises to the cell surface. The enzyme catalyses (2R)-2-phosphoglycerate = phosphoenolpyruvate + H2O. It participates in carbohydrate degradation; glycolysis; pyruvate from D-glyceraldehyde 3-phosphate: step 4/5. Its function is as follows. Catalyzes the reversible conversion of 2-phosphoglycerate (2-PG) into phosphoenolpyruvate (PEP). It is essential for the degradation of carbohydrates via glycolysis. In Serratia proteamaculans (strain 568), this protein is Enolase.